Here is a 435-residue protein sequence, read N- to C-terminus: Methionine aminopeptidase 2-2 (435 aa).

The segment at 1-92 (MAAQTTEKLQ…VPVSNLFPNN (92 aa)) is disordered. A compositionally biased stretch (low complexity) spans 24-33 (DAPAAGQAEA). Acidic residues predominate over residues 34-45 (GEAEEDSDDEKD). Basic residues predominate over residues 59 to 73 (AKKKKRKSKKKKKGG). Histidine 197 lines the substrate pocket. Residues aspartate 217, aspartate 228, and histidine 297 each contribute to the a divalent metal cation site. Histidine 305 is a binding site for substrate. The a divalent metal cation site is built by glutamate 330 and glutamate 425.

This sequence belongs to the peptidase M24A family. Methionine aminopeptidase eukaryotic type 2 subfamily. Co(2+) is required as a cofactor. Zn(2+) serves as cofactor. The cofactor is Mn(2+). It depends on Fe(2+) as a cofactor.

Its subcellular location is the cytoplasm. It catalyses the reaction Release of N-terminal amino acids, preferentially methionine, from peptides and arylamides.. In terms of biological role, cotranslationally removes the N-terminal methionine from nascent proteins. The N-terminal methionine is often cleaved when the second residue in the primary sequence is small and uncharged (Met-Ala-, Cys, Gly, Pro, Ser, Thr, or Val). In Aspergillus clavatus (strain ATCC 1007 / CBS 513.65 / DSM 816 / NCTC 3887 / NRRL 1 / QM 1276 / 107), this protein is Methionine aminopeptidase 2-2.